The chain runs to 234 residues: 2,3,4,5-tetrahydropyridine-2,6-dicarboxylate N-acetyltransferase (234 aa).

This sequence belongs to the transferase hexapeptide repeat family. DapH subfamily.

It catalyses the reaction (S)-2,3,4,5-tetrahydrodipicolinate + acetyl-CoA + H2O = L-2-acetamido-6-oxoheptanedioate + CoA. Its pathway is amino-acid biosynthesis; L-lysine biosynthesis via DAP pathway; LL-2,6-diaminopimelate from (S)-tetrahydrodipicolinate (acetylase route): step 1/3. Functionally, catalyzes the transfer of an acetyl group from acetyl-CoA to tetrahydrodipicolinate. The polypeptide is 2,3,4,5-tetrahydropyridine-2,6-dicarboxylate N-acetyltransferase (Lacticaseibacillus casei (strain BL23) (Lactobacillus casei)).